The sequence spans 366 residues: Histidinol-phosphate aminotransferase 1 (366 aa).

Position 226 is an N6-(pyridoxal phosphate)lysine (Lys226).

This sequence belongs to the class-II pyridoxal-phosphate-dependent aminotransferase family. Histidinol-phosphate aminotransferase subfamily. Homodimer. It depends on pyridoxal 5'-phosphate as a cofactor.

The enzyme catalyses L-histidinol phosphate + 2-oxoglutarate = 3-(imidazol-4-yl)-2-oxopropyl phosphate + L-glutamate. It functions in the pathway amino-acid biosynthesis; L-histidine biosynthesis; L-histidine from 5-phospho-alpha-D-ribose 1-diphosphate: step 7/9. The sequence is that of Histidinol-phosphate aminotransferase 1 from Mannheimia succiniciproducens (strain KCTC 0769BP / MBEL55E).